A 238-amino-acid chain; its full sequence is Large ribosomal subunit protein uL2 (238 aa).

Residues 199 to 238 (PHGGGLHQSVSRPSTVSRNAPPGRKVGHIAARRTGRKEGA) form a disordered region. The segment covering 206 to 216 (QSVSRPSTVSR) has biased composition (polar residues). Residues 223–238 (KVGHIAARRTGRKEGA) show a composition bias toward basic residues.

This sequence belongs to the universal ribosomal protein uL2 family. As to quaternary structure, part of the 50S ribosomal subunit. Forms a bridge to the 30S subunit in the 70S ribosome.

Functionally, one of the primary rRNA binding proteins. Required for association of the 30S and 50S subunits to form the 70S ribosome, for tRNA binding and peptide bond formation. It has been suggested to have peptidyltransferase activity; this is somewhat controversial. Makes several contacts with the 16S rRNA in the 70S ribosome. This Sulfurisphaera tokodaii (strain DSM 16993 / JCM 10545 / NBRC 100140 / 7) (Sulfolobus tokodaii) protein is Large ribosomal subunit protein uL2.